The chain runs to 282 residues: MSDNKIYLCAISNIESGTCNEDCKFCTQSVKYKADIERYRRKEIEDIVNEAKKARANKAVGFCLVTAGTGLDDKRLDYVCRAADAVHKAVPDISLIACNGIASYEQLKELKKHGIENYNHNLETAREFYNEICTTHSWDDRYETCLNAKKAGLYLCTGGIFGLGETQENRISMLKSIASLEPMSVPINFFHPNDALPLVKNPLTKQEAFDLVKLARSYLPNQMLMIAGGRELMFGEEQYDVFKHGANALVVGDYLTTGGRDAQDDIDAVTALGYEIAFACHQ.

Residues 1–230 (MSDNKIYLCA…NQMLMIAGGR (230 aa)) enclose the Radical SAM core domain. Residues cysteine 19, cysteine 23, and cysteine 26 each contribute to the [4Fe-4S] cluster site. Residues cysteine 63, cysteine 98, and cysteine 156 each coordinate [2Fe-2S] cluster.

Belongs to the radical SAM superfamily. Biotin synthase family. Homodimer. [4Fe-4S] cluster serves as cofactor. [2Fe-2S] cluster is required as a cofactor.

The enzyme catalyses (4R,5S)-dethiobiotin + (sulfur carrier)-SH + 2 reduced [2Fe-2S]-[ferredoxin] + 2 S-adenosyl-L-methionine = (sulfur carrier)-H + biotin + 2 5'-deoxyadenosine + 2 L-methionine + 2 oxidized [2Fe-2S]-[ferredoxin]. The protein operates within cofactor biosynthesis; biotin biosynthesis; biotin from 7,8-diaminononanoate: step 2/2. Its function is as follows. Catalyzes the conversion of dethiobiotin (DTB) to biotin by the insertion of a sulfur atom into dethiobiotin via a radical-based mechanism. This chain is Biotin synthase, found in Aliarcobacter butzleri (strain RM4018) (Arcobacter butzleri).